The following is a 348-amino-acid chain: tRNA N6-adenosine threonylcarbamoyltransferase (348 aa).

2 residues coordinate Fe cation: His-115 and His-119. Substrate-binding positions include 138–142, Asp-171, Gly-184, and Asn-276; that span reads LVSGG. Asp-304 serves as a coordination point for Fe cation.

Belongs to the KAE1 / TsaD family. Fe(2+) is required as a cofactor.

Its subcellular location is the cytoplasm. The catalysed reaction is L-threonylcarbamoyladenylate + adenosine(37) in tRNA = N(6)-L-threonylcarbamoyladenosine(37) in tRNA + AMP + H(+). Its function is as follows. Required for the formation of a threonylcarbamoyl group on adenosine at position 37 (t(6)A37) in tRNAs that read codons beginning with adenine. Is involved in the transfer of the threonylcarbamoyl moiety of threonylcarbamoyl-AMP (TC-AMP) to the N6 group of A37, together with TsaE and TsaB. TsaD likely plays a direct catalytic role in this reaction. The sequence is that of tRNA N6-adenosine threonylcarbamoyltransferase from Xylella fastidiosa (strain 9a5c).